A 155-amino-acid chain; its full sequence is Small ribosomal subunit protein uS17 (155 aa).

This sequence belongs to the universal ribosomal protein uS17 family. In terms of assembly, component of the small ribosomal subunit. Mature ribosomes consist of a small (40S) and a large (60S) subunit. The 40S subunit contains about 32 different proteins and 1 molecule of RNA (18S). The 60S subunit contains 45 different proteins and 3 molecules of RNA (25S, 5.8S and 5S).

It localises to the cytoplasm. Functionally, component of the ribosome, a large ribonucleoprotein complex responsible for the synthesis of proteins in the cell. The small ribosomal subunit (SSU) binds messenger RNAs (mRNAs) and translates the encoded message by selecting cognate aminoacyl-transfer RNA (tRNA) molecules. The large subunit (LSU) contains the ribosomal catalytic site termed the peptidyl transferase center (PTC), which catalyzes the formation of peptide bonds, thereby polymerizing the amino acids delivered by tRNAs into a polypeptide chain. The nascent polypeptides leave the ribosome through a tunnel in the LSU and interact with protein factors that function in enzymatic processing, targeting, and the membrane insertion of nascent chains at the exit of the ribosomal tunnel. The protein is Small ribosomal subunit protein uS17 of Candida albicans (strain SC5314 / ATCC MYA-2876) (Yeast).